Consider the following 768-residue polypeptide: Telomere repeats-binding bouquet formation protein 1 (768 aa).

ARM repeat units follow at residues 101-145 and 341-384; these read ELFQ…REVG and NGLP…GQNS. A coiled-coil region spans residues 399 to 448; that stretch reads ETLREHWKAAKEILCRIKQFEKGGKEEKQQNRSGHYKDNTPSMKVNIQTN. 2 stretches are compositionally biased toward basic and acidic residues: residues 422-436 and 461-475; these read GKEE…HYKD and RAED…ELRS. 2 disordered regions span residues 422–441 and 454–475; these read GKEE…TPSM and ADST…ELRS. Residues 524–700 are interaction with TERF1; the sequence is QNLDKEKTFD…EAMERRSPVP (177 aa). At Thr648 the chain carries Phosphothreonine. The Myb-like domain maps to 707-760; sequence KKRRIRKDFTKEEVNYLFHGVKTMGNHWNSILWSFPFQKGRRAVDLAHKYHRLI.

Belongs to the TERB1 family. Component of the MAJIN-TERB1-TERB2 complex, composed of MAJIN, TERB1 and TERB2. Interacts with TERF1, STAG3 and SUN1. Interacts (via Myb-like domain) with the cohesin complex; probably mediated via interaction with STAG3. In terms of processing, phosphorylated by CDK. Phosphorylation by CDK takes place in late prophase when the cap exchange is prominent. is important for the stabilization of telomere attachment but dispenable for the cap exchange. In terms of tissue distribution, expressed in testis and fetal oocytes.

The protein localises to the chromosome. The protein resides in the telomere. It is found in the nucleus inner membrane. Functionally, meiosis-specific telomere-associated protein involved in meiotic telomere attachment to the nucleus inner membrane, a crucial step for homologous pairing and synapsis. Component of the MAJIN-TERB1-TERB2 complex, which promotes telomere cap exchange by mediating attachment of telomeric DNA to the inner nuclear membrane and replacement of the protective cap of telomeric chromosomes: in early meiosis, the MAJIN-TERB1-TERB2 complex associates with telomeric DNA and the shelterin/telosome complex. During prophase, the complex matures and promotes release of the shelterin/telosome complex from telomeric DNA. In the MAJIN-TERB1-TERB2 complex, TERB1 probably mediates association with the shelterin/telosome complex via interaction with TERF1, promoting priming telomeric DNA attachment'. Promotes telomere association with the nuclear envelope and deposition of the SUN-KASH/LINC complex. Also recruits cohesin to telomeres to develop structural rigidity. This chain is Telomere repeats-binding bouquet formation protein 1, found in Mus musculus (Mouse).